The following is a 510-amino-acid chain: Bifunctional pantoate ligase/cytidylate kinase (510 aa).

Positions 1-276 (MKKVIIRKTE…CGETRLIDHV (276 aa)) are pantoate--beta-alanine ligase. 29 to 36 (MGNLHDGH) contributes to the ATP binding site. H36 serves as the catalytic Proton donor. Q61 contributes to the (R)-pantoate binding site. Residue Q61 coordinates beta-alanine. 150 to 153 (GEKD) serves as a coordination point for ATP. Position 156 (Q156) interacts with (R)-pantoate. 187-190 (LSSR) serves as a coordination point for ATP. Residues 277–510 (FLMKRRPIIA…DRIPKETEIK (234 aa)) are cytidylate kinase.

It in the N-terminal section; belongs to the pantothenate synthetase family. The protein in the C-terminal section; belongs to the cytidylate kinase family. Type 1 subfamily.

Its subcellular location is the cytoplasm. The catalysed reaction is (R)-pantoate + beta-alanine + ATP = (R)-pantothenate + AMP + diphosphate + H(+). It carries out the reaction CMP + ATP = CDP + ADP. The enzyme catalyses dCMP + ATP = dCDP + ADP. The protein operates within cofactor biosynthesis; (R)-pantothenate biosynthesis; (R)-pantothenate from (R)-pantoate and beta-alanine: step 1/1. In terms of biological role, catalyzes the condensation of pantoate with beta-alanine in an ATP-dependent reaction via a pantoyl-adenylate intermediate. Catalyzes the transfer of a phosphate group from ATP to either CMP or dCMP to form CDP or dCDP and ADP, respectively. In Prochlorococcus marinus (strain MIT 9301), this protein is Bifunctional pantoate ligase/cytidylate kinase.